The following is a 686-amino-acid chain: ATP-dependent zinc metalloprotease FTSH 1, chloroplastic (686 aa).

Residues Met1–Thr16 constitute a chloroplast transit peptide. Residues Phe173–Leu193 form a helical membrane-spanning segment. Gly272–Thr279 contacts ATP. His494 is a Zn(2+) binding site. Glu495 is an active-site residue. The Zn(2+) site is built by His498 and Asp575.

It in the N-terminal section; belongs to the AAA ATPase family. The protein in the C-terminal section; belongs to the peptidase M41 family. It depends on Zn(2+) as a cofactor.

The protein localises to the plastid. Its subcellular location is the chloroplast thylakoid membrane. Its function is as follows. Probable ATP-dependent zinc metallopeptidase. This chain is ATP-dependent zinc metalloprotease FTSH 1, chloroplastic (FTSH1), found in Oryza sativa subsp. japonica (Rice).